A 344-amino-acid polypeptide reads, in one-letter code: GDSL esterase/lipase At2g19010 (344 aa).

An N-terminal signal peptide occupies residues 1–21; the sequence is MSKACWLVAAIIFTAATVVYG. Ser-33 serves as the catalytic Nucleophile. An N-linked (GlcNAc...) asparagine glycan is attached at Asn-303. Residues Asp-311 and His-314 contribute to the active site.

It belongs to the 'GDSL' lipolytic enzyme family.

The protein localises to the secreted. The polypeptide is GDSL esterase/lipase At2g19010 (Arabidopsis thaliana (Mouse-ear cress)).